Consider the following 37-residue polypeptide: MKVQASVRKICENCRLIRRRRRVMVVCKNPKHKQRQG.

This sequence belongs to the bacterial ribosomal protein bL36 family.

The protein localises to the plastid. It localises to the chloroplast. The polypeptide is Large ribosomal subunit protein bL36c (Chaetosphaeridium globosum (Charophycean green alga)).